Here is an 830-residue protein sequence, read N- to C-terminus: C-Jun-amino-terminal kinase-interacting protein 2 (830 aa).

Disordered stretches follow at residues 1–26 (MADRAEMFSLSTFHSLSPPGCRPPQD), 44–354 (CGLG…ADSP), 367–438 (EGSS…PGPC), 452–504 (LWAT…GSTA), and 539–574 (GNDSEEDSSCEASEEEAGATLLGSDQVPEDASPDSP). The span at 77-105 (DFQEFEMIDDNEEEDDEEEEEEEEEEEDG) shows a compositional bias: acidic residues. The interval 111–278 (AGGGPGSQAL…RMISSISETE (168 aa)) is JNK-binding domain (JBD). Over residues 142–172 (LHLTTLGAQDSLNNNNGGFTSAPPSSWQETV) the composition is skewed to polar residues. Composition is skewed to low complexity over residues 176–190 (PAQEPLKELPAPLLP) and 218–227 (ASSGGASPSS). The segment covering 233-249 (ADLRSHSSGGHEGRRSS) has biased composition (basic and acidic residues). Positions 242 to 504 (GHEGRRSSQE…PGSRTTGSTA (263 aa)) are necessary for interaction with FGF13. Serine 257, serine 304, and serine 307 each carry phosphoserine. A compositionally biased stretch (low complexity) spans 271 to 307 (ISSISETELELSSDGGSSSGRSSHLTNSIEEASSPAS). Acidic residues predominate over residues 333–352 (TNSEYESGSESEPDLSEDAD). Residues 427-437 (APRLGPAQPGP) show a composition bias toward low complexity. Composition is skewed to acidic residues over residues 471–490 (SEEEEEDEEEDEEDEEDAED) and 541–555 (DSEEDSSCEASEEEA). In terms of domain architecture, SH3 spans 610-671 (EREQTHRAVF…PAFYAHAVPG (62 aa)). The PID domain occupies 683-819 (PCWVDRFDVQ…FLEYYQEHLA (137 aa)).

The protein belongs to the JIP scaffold family. Forms homo- or heterooligomeric complexes. Binds specific components of the JNK signaling pathway namely JNK1, JNK2, JNK3, MAP2K7, MAP3K10, MAP3K11, MAP3K12 and MAPK13. Also binds the proline-rich domain-containing splice variant of apolipoprotein E receptor 2 (ApoER2). Binds the TPR motif-containing C-terminal of kinesin light chain. Binds the cytoplasmic tails of LRP1 and LRP2 (Megalin). Interacts with DCLK2. Interacts with FGF13; enables the interaction with MAPK13 and may regulate the MAPK8IP2 scaffolding activity. Interacts with TIAM1 and TIAM2. Interacts with SH3RF2. In terms of tissue distribution, highly expressed in brain. Expressed in all neurons. Also expressed in testis, primarily in the epididymal epidermis.

It is found in the cytoplasm. Functionally, the JNK-interacting protein (JIP) group of scaffold proteins selectively mediates JNK signaling by aggregating specific components of the MAPK cascade to form a functional JNK signaling module. JIP2 inhibits IL1 beta-induced apoptosis in insulin-secreting cells. The protein is C-Jun-amino-terminal kinase-interacting protein 2 (Mapk8ip2) of Mus musculus (Mouse).